The following is a 255-amino-acid chain: MLVMAGLGLYDELDVTLKTVEFAKKVDKIYAEFYTAILTGTTIEKIEKTLQKEITVLNREKVEYETNKLIEEAKEKDIMFLTAGDPMVATTHVDIAVEARKKGIEVIILNAPSIYSAIGITGLQLYKFGKTTSIVFPEPNYFPETPYDVIKDNLSLGYHTLCLLDIQTDKQKFMTANEGLSVLLEIEEKRKEKIIDENTKVLVVARAGSIKPGLFYGKIKDLIKHDFGTPLHCVIILGKLHFMETDALKYLFENI.

S-adenosyl-L-methionine-binding positions include L9, D85, V88, 113–114 (SI), L164, A207, and H232.

Belongs to the diphthine synthase family. As to quaternary structure, homodimer.

It carries out the reaction 2-[(3S)-amino-3-carboxypropyl]-L-histidyl-[translation elongation factor 2] + 3 S-adenosyl-L-methionine = diphthine-[translation elongation factor 2] + 3 S-adenosyl-L-homocysteine + 3 H(+). It functions in the pathway protein modification; peptidyl-diphthamide biosynthesis. Its function is as follows. S-adenosyl-L-methionine-dependent methyltransferase that catalyzes the trimethylation of the amino group of the modified target histidine residue in translation elongation factor 2 (EF-2), to form an intermediate called diphthine. The three successive methylation reactions represent the second step of diphthamide biosynthesis. The chain is Diphthine synthase from Methanococcus vannielii (strain ATCC 35089 / DSM 1224 / JCM 13029 / OCM 148 / SB).